The sequence spans 308 residues: Ribonuclease HIII (308 aa).

The 218-residue stretch at 91-308 (KNVIGSDEVG…TEKALKMVKK (218 aa)) folds into the RNase H type-2 domain. Asp-97, Glu-98, and Asp-202 together coordinate a divalent metal cation.

Belongs to the RNase HII family. RnhC subfamily. It depends on Mn(2+) as a cofactor. The cofactor is Mg(2+).

It localises to the cytoplasm. It carries out the reaction Endonucleolytic cleavage to 5'-phosphomonoester.. In terms of biological role, endonuclease that specifically degrades the RNA of RNA-DNA hybrids. The protein is Ribonuclease HIII of Listeria monocytogenes serovar 1/2a (strain ATCC BAA-679 / EGD-e).